Here is a 200-residue protein sequence, read N- to C-terminus: NADH-quinone oxidoreductase subunit C (200 aa).

Belongs to the complex I 30 kDa subunit family. In terms of assembly, NDH-1 is composed of 14 different subunits. Subunits NuoB, C, D, E, F, and G constitute the peripheral sector of the complex.

Its subcellular location is the cell inner membrane. The enzyme catalyses a quinone + NADH + 5 H(+)(in) = a quinol + NAD(+) + 4 H(+)(out). Its function is as follows. NDH-1 shuttles electrons from NADH, via FMN and iron-sulfur (Fe-S) centers, to quinones in the respiratory chain. The immediate electron acceptor for the enzyme in this species is believed to be ubiquinone. Couples the redox reaction to proton translocation (for every two electrons transferred, four hydrogen ions are translocated across the cytoplasmic membrane), and thus conserves the redox energy in a proton gradient. The polypeptide is NADH-quinone oxidoreductase subunit C (Burkholderia thailandensis (strain ATCC 700388 / DSM 13276 / CCUG 48851 / CIP 106301 / E264)).